Here is a 102-residue protein sequence, read N- to C-terminus: Small ribosomal subunit protein uS10 (102 aa).

This sequence belongs to the universal ribosomal protein uS10 family. In terms of assembly, part of the 30S ribosomal subunit.

Its function is as follows. Involved in the binding of tRNA to the ribosomes. This is Small ribosomal subunit protein uS10 from Bacillus cereus (strain ATCC 10987 / NRS 248).